The following is a 287-amino-acid chain: Glycine--tRNA ligase alpha subunit (287 aa).

It belongs to the class-II aminoacyl-tRNA synthetase family. Tetramer of two alpha and two beta subunits.

It is found in the cytoplasm. It carries out the reaction tRNA(Gly) + glycine + ATP = glycyl-tRNA(Gly) + AMP + diphosphate. This chain is Glycine--tRNA ligase alpha subunit, found in Petrotoga mobilis (strain DSM 10674 / SJ95).